A 429-amino-acid chain; its full sequence is Serine--tRNA ligase (429 aa).

Residue 236-238 (TAE) coordinates L-serine. 267 to 269 (RSE) serves as a coordination point for ATP. Residue E290 coordinates L-serine. 354–357 (EISS) is a binding site for ATP. S390 contacts L-serine.

This sequence belongs to the class-II aminoacyl-tRNA synthetase family. Type-1 seryl-tRNA synthetase subfamily. Homodimer. The tRNA molecule binds across the dimer.

It localises to the cytoplasm. The catalysed reaction is tRNA(Ser) + L-serine + ATP = L-seryl-tRNA(Ser) + AMP + diphosphate + H(+). It carries out the reaction tRNA(Sec) + L-serine + ATP = L-seryl-tRNA(Sec) + AMP + diphosphate + H(+). It participates in aminoacyl-tRNA biosynthesis; selenocysteinyl-tRNA(Sec) biosynthesis; L-seryl-tRNA(Sec) from L-serine and tRNA(Sec): step 1/1. Catalyzes the attachment of serine to tRNA(Ser). Is also able to aminoacylate tRNA(Sec) with serine, to form the misacylated tRNA L-seryl-tRNA(Sec), which will be further converted into selenocysteinyl-tRNA(Sec). The sequence is that of Serine--tRNA ligase from Alcanivorax borkumensis (strain ATCC 700651 / DSM 11573 / NCIMB 13689 / SK2).